Consider the following 183-residue polypeptide: Glutathione-regulated potassium-efflux system ancillary protein KefG (183 aa).

Belongs to the NAD(P)H dehydrogenase (quinone) family. KefG subfamily. In terms of assembly, interacts with KefB.

It localises to the cell inner membrane. It carries out the reaction a quinone + NADH + H(+) = a quinol + NAD(+). The enzyme catalyses a quinone + NADPH + H(+) = a quinol + NADP(+). Its function is as follows. Regulatory subunit of a potassium efflux system that confers protection against electrophiles. Required for full activity of KefB. This Pectobacterium carotovorum subsp. carotovorum (strain PC1) protein is Glutathione-regulated potassium-efflux system ancillary protein KefG.